We begin with the raw amino-acid sequence, 104 residues long: Large ribosomal subunit protein uL24 (104 aa).

Belongs to the universal ribosomal protein uL24 family. In terms of assembly, part of the 50S ribosomal subunit.

Its function is as follows. One of two assembly initiator proteins, it binds directly to the 5'-end of the 23S rRNA, where it nucleates assembly of the 50S subunit. One of the proteins that surrounds the polypeptide exit tunnel on the outside of the subunit. The polypeptide is Large ribosomal subunit protein uL24 (Neorickettsia sennetsu (strain ATCC VR-367 / Miyayama) (Ehrlichia sennetsu)).